The sequence spans 618 residues: Probable protein disulfide-isomerase A4 (618 aa).

The N-terminal stretch at 1 to 21 (MMFDRRFFALVVLLCVSAVRS) is a signal peptide. Thioredoxin domains follow at residues 22 to 139 (TEDA…SRVD), 138 to 254 (VDPN…DQSK), and 480 to 609 (SSGK…KHGV). Disulfide bonds link cysteine 65/cysteine 68, cysteine 176/cysteine 179, and cysteine 529/cysteine 532. The short motif at 615–618 (KDEL) is the Prevents secretion from ER element.

Belongs to the protein disulfide isomerase family.

The protein resides in the endoplasmic reticulum lumen. The enzyme catalyses Catalyzes the rearrangement of -S-S- bonds in proteins.. The protein is Probable protein disulfide-isomerase A4 of Caenorhabditis elegans.